The following is a 294-amino-acid chain: 4-hydroxy-tetrahydrodipicolinate synthase (294 aa).

Residue T45 participates in pyruvate binding. The active-site Proton donor/acceptor is Y133. Residue K161 is the Schiff-base intermediate with substrate of the active site. I203 contacts pyruvate.

The protein belongs to the DapA family. In terms of assembly, homotetramer; dimer of dimers.

The protein localises to the cytoplasm. It catalyses the reaction L-aspartate 4-semialdehyde + pyruvate = (2S,4S)-4-hydroxy-2,3,4,5-tetrahydrodipicolinate + H2O + H(+). It functions in the pathway amino-acid biosynthesis; L-lysine biosynthesis via DAP pathway; (S)-tetrahydrodipicolinate from L-aspartate: step 3/4. Its function is as follows. Catalyzes the condensation of (S)-aspartate-beta-semialdehyde [(S)-ASA] and pyruvate to 4-hydroxy-tetrahydrodipicolinate (HTPA). This chain is 4-hydroxy-tetrahydrodipicolinate synthase, found in Shewanella pealeana (strain ATCC 700345 / ANG-SQ1).